Reading from the N-terminus, the 366-residue chain is tRNA-specific 2-thiouridylase MnmA (366 aa).

ATP is bound by residues 6 to 13 (AMSGGVDS) and Leu-32. The active-site Nucleophile is Cys-101. Cys-101 and Cys-197 are disulfide-bonded. Gly-125 lines the ATP pocket. An interaction with tRNA region spans residues 147-149 (KDQ). Catalysis depends on Cys-197, which acts as the Cysteine persulfide intermediate.

Belongs to the MnmA/TRMU family.

Its subcellular location is the cytoplasm. The catalysed reaction is S-sulfanyl-L-cysteinyl-[protein] + uridine(34) in tRNA + AH2 + ATP = 2-thiouridine(34) in tRNA + L-cysteinyl-[protein] + A + AMP + diphosphate + H(+). Functionally, catalyzes the 2-thiolation of uridine at the wobble position (U34) of tRNA, leading to the formation of s(2)U34. The chain is tRNA-specific 2-thiouridylase MnmA from Cutibacterium acnes (strain DSM 16379 / KPA171202) (Propionibacterium acnes).